A 231-amino-acid polypeptide reads, in one-letter code: Biosynthetic peptidoglycan transglycosylase (231 aa).

The helical transmembrane segment at 7 to 27 (LLFWLILVPILLVLLMQLYFF) threads the bilayer.

Belongs to the glycosyltransferase 51 family.

The protein localises to the cell inner membrane. The enzyme catalyses [GlcNAc-(1-&gt;4)-Mur2Ac(oyl-L-Ala-gamma-D-Glu-L-Lys-D-Ala-D-Ala)](n)-di-trans,octa-cis-undecaprenyl diphosphate + beta-D-GlcNAc-(1-&gt;4)-Mur2Ac(oyl-L-Ala-gamma-D-Glu-L-Lys-D-Ala-D-Ala)-di-trans,octa-cis-undecaprenyl diphosphate = [GlcNAc-(1-&gt;4)-Mur2Ac(oyl-L-Ala-gamma-D-Glu-L-Lys-D-Ala-D-Ala)](n+1)-di-trans,octa-cis-undecaprenyl diphosphate + di-trans,octa-cis-undecaprenyl diphosphate + H(+). It functions in the pathway cell wall biogenesis; peptidoglycan biosynthesis. Peptidoglycan polymerase that catalyzes glycan chain elongation from lipid-linked precursors. The protein is Biosynthetic peptidoglycan transglycosylase of Herminiimonas arsenicoxydans.